Reading from the N-terminus, the 124-residue chain is Fluoride-specific ion channel FluC (124 aa).

Helical transmembrane passes span 1 to 21 (MAYL…HFIN), 36 to 56 (TFFI…YLAF), 66 to 86 (LFLM…SLDA), and 94 to 114 (AVGL…AGLF). Na(+)-binding residues include glycine 74 and threonine 77.

It belongs to the fluoride channel Fluc/FEX (TC 1.A.43) family.

Its subcellular location is the cell inner membrane. The enzyme catalyses fluoride(in) = fluoride(out). Its activity is regulated as follows. Na(+) is not transported, but it plays an essential structural role and its presence is essential for fluoride channel function. In terms of biological role, fluoride-specific ion channel. Important for reducing fluoride concentration in the cell, thus reducing its toxicity. The protein is Fluoride-specific ion channel FluC of Rhodopseudomonas palustris (strain ATCC BAA-98 / CGA009).